The chain runs to 1072 residues: E3 ubiquitin-protein ligase RNF31 (1072 aa).

Residues 1–485 (MPGEEEERAF…PEKQRQDKMR (485 aa)) form a polyubiquitin-binding region. A PUB domain is found at 71–142 (TLSTALNILE…SFPEGQEEPD (72 aa)). Residues 263 to 290 (QGTHLSPSLPASAQPRPQSTSLLALGDS) are disordered. Polar residues predominate over residues 265-280 (THLSPSLPASAQPRPQ). Positions 281-290 (STSLLALGDS) are enriched in low complexity. 2 consecutive RanBP2-type zinc fingers follow at residues 299-329 (SAHL…PRGC) and 350-379 (ARGR…PRLA). At Ser383 the chain carries Phosphoserine. A RanBP2-type 3 zinc finger spans residues 409-438 (QSQVWYCIHCTFCNSSPGWVCVMCNRTSSP). The segment at 443–484 (HAPRPYASSLEKGPPKPGPPRRLSAPLPSSCGDPEKQRQDKM) is disordered. The segment covering 463-472 (RRLSAPLPSS) has biased composition (low complexity). Ser466 is modified (phosphoserine). Residues 475–484 (DPEKQRQDKM) are compositionally biased toward basic and acidic residues. The segment at 563-616 (GNLDEAVEECVRTRRRKVQELQSLGFGPEEGSLQALFQHGGDVSRALTELQRQR) is interaction with RBCK1. The UBA domain maps to 564-615 (NLDEAVEECVRTRRRKVQELQSLGFGPEEGSLQALFQHGGDVSRALTELQRQ). Residues 695-929 (LAQECAVCGW…KSLHGHHPRD (235 aa)) are TRIAD supradomain. Residues Cys699, Cys702, Cys717, Cys719, Cys722, and Cys725 each coordinate Zn(2+). The segment at 699-749 (CAVCGWALPHNRMQALTSCECTICPDCFRQHFTIALKEKHITDMVCPACGR) adopts an RING-type 1 zinc-finger fold. Residue Lys735 forms a (Microbial infection) Glycyl lysine isopeptide (Lys-Gly) (interchain with G-Cter in ubiquitin) linkage. Zn(2+) is bound by residues Cys744 and Cys747. Residues 779–841 (ALFHKKLTEG…WEEQHRGRSC (63 aa)) form an IBR-type zinc finger. Lys783 is covalently cross-linked ((Microbial infection) Glycyl lysine isopeptide (Lys-Gly) (interchain with G-Cter in ubiquitin)). Cys799, Cys802, Cys817, Cys820, Cys825, Cys828, His836, Cys841, Cys871, and Cys874 together coordinate Zn(2+). The RING-type 2; atypical zinc finger occupies 871-901 (CPKCKFSYALARGGCMHFHCTQCRHQFCSGC). Residue Lys875 forms a (Microbial infection) Glycyl lysine isopeptide (Lys-Gly) (interchain with G-Cter in ubiquitin) linkage. Cys885 is a catalytic residue. Positions 890, 893, 898, 901, 916, and 925 each coordinate Zn(2+). The LDD domain stretch occupies residues 910–1072 (KCPEPNCRVK…LGQSIPRRRK (163 aa)).

Belongs to the RBR family. In terms of assembly, component of the LUBAC complex (linear ubiquitin chain assembly complex) which consists of SHARPIN, RBCK1 and RNF31. LUBAC has a MW of approximately 600 kDa suggesting a heteromultimeric assembly of its subunits. Associates with the TNF-R1 signaling complex (TNF-RSC) in a stimulation-dependent manner. Interacts (via the PUB domain) with OTULIN (via the PIM motif); the interaction is direct. Interacts (via the PUB domain) with VCP (via the PIM motif). Interacts (via the PUB domain) with SPATA2 (via the PIM motif); interaction is direct and bridges RNF31 and CYLD. Interacts with CYLD; the interaction is indirect and is mediated via SPATA2. Interacts with MUSK. Interacts with CARD11, promoting linear ubiquitination of BCL10. As to quaternary structure, (Microbial infection) Interacts with S.flexneri E3 ubiquitin-protein ligases IpaH1.4 and IpaH2.5, leading to its ubiquitination. Post-translationally, autoubiquitinated. Interaction with OTULIN is required to suppress formation of 'Met-1'-linked polyubiquitin chains and prevent subsequent inactivation of the LUBAC complex. In terms of processing, cleaved by caspase during apoptosis. (Microbial infection) Ubiquitinated by S.flexneri E3 ubiquitin-protein ligases IpaH1.4 and IpaH2.5, leading to its degradation by the proteasome, thereby preventing formation of the bacterial ubiquitin coat and activation of innate immunity. As to expression, expressed in both normal and transformed breast epithelial cell lines.

Its subcellular location is the cytoplasm. It carries out the reaction [E2 ubiquitin-conjugating enzyme]-S-ubiquitinyl-L-cysteine + [acceptor protein]-L-lysine = [E2 ubiquitin-conjugating enzyme]-L-cysteine + [acceptor protein]-N(6)-ubiquitinyl-L-lysine.. It functions in the pathway protein modification; protein ubiquitination. Its function is as follows. E3 ubiquitin-protein ligase component of the LUBAC complex which conjugates linear ('Met-1'-linked) polyubiquitin chains to substrates and plays a key role in NF-kappa-B activation and regulation of inflammation. LUBAC conjugates linear polyubiquitin to IKBKG and RIPK1 and is involved in activation of the canonical NF-kappa-B and the JNK signaling pathways. Linear ubiquitination mediated by the LUBAC complex interferes with TNF-induced cell death and thereby prevents inflammation. LUBAC is recruited to the TNF-R1 signaling complex (TNF-RSC) following polyubiquitination of TNF-RSC components by BIRC2 and/or BIRC3 and to conjugate linear polyubiquitin to IKBKG and possibly other components contributing to the stability of the complex. The LUBAC complex is also involved in innate immunity by conjugating linear polyubiquitin chains at the surface of bacteria invading the cytosol to form the ubiquitin coat surrounding bacteria. LUBAC is not able to initiate formation of the bacterial ubiquitin coat, and can only promote formation of linear polyubiquitins on pre-existing ubiquitin. Recruited to the surface of bacteria by RNF213, which initiates the bacterial ubiquitin coat. The bacterial ubiquitin coat acts as an 'eat-me' signal for xenophagy and promotes NF-kappa-B activation. Together with OTULIN, the LUBAC complex regulates the canonical Wnt signaling during angiogenesis. RNF31 is required for linear ubiquitination of BCL10, thereby promoting TCR-induced NF-kappa-B activation. Binds polyubiquitin of different linkage types. The sequence is that of E3 ubiquitin-protein ligase RNF31 from Homo sapiens (Human).